A 224-amino-acid polypeptide reads, in one-letter code: tRNA (guanine-N(7)-)-methyltransferase (224 aa).

4 residues coordinate S-adenosyl-L-methionine: Glu-54, Glu-79, Glu-106, and Asp-129. Asp-129 is a catalytic residue. Substrate is bound by residues Lys-133 and Asp-165.

The protein belongs to the class I-like SAM-binding methyltransferase superfamily. TrmB family.

It carries out the reaction guanosine(46) in tRNA + S-adenosyl-L-methionine = N(7)-methylguanosine(46) in tRNA + S-adenosyl-L-homocysteine. It participates in tRNA modification; N(7)-methylguanine-tRNA biosynthesis. Catalyzes the formation of N(7)-methylguanine at position 46 (m7G46) in tRNA. The sequence is that of tRNA (guanine-N(7)-)-methyltransferase from Chlamydia trachomatis serovar D (strain ATCC VR-885 / DSM 19411 / UW-3/Cx).